Consider the following 219-residue polypeptide: Adenylate kinase (219 aa).

Residue 10-15 participates in ATP binding; the sequence is GAGKGT. Positions 30-59 are NMP; the sequence is ATGDLFRANISQGTDLGKQARAYMDAGQLV. AMP contacts are provided by residues threonine 31, arginine 36, 57-59, 85-88, and glutamine 92; these read QLV and GFPR. Residues 126 to 164 form an LID region; that stretch reads GRRVCRNNSAHVFHLTYNPPKAEGVCDACGGELYQRDDD. ATP-binding positions include arginine 127 and 137–138; that span reads VF. Positions 161 and 172 each coordinate AMP. Residue glycine 200 coordinates ATP.

Belongs to the adenylate kinase family. In terms of assembly, monomer.

The protein resides in the cytoplasm. The catalysed reaction is AMP + ATP = 2 ADP. It participates in purine metabolism; AMP biosynthesis via salvage pathway; AMP from ADP: step 1/1. Its function is as follows. Catalyzes the reversible transfer of the terminal phosphate group between ATP and AMP. Plays an important role in cellular energy homeostasis and in adenine nucleotide metabolism. In Streptomyces griseus subsp. griseus (strain JCM 4626 / CBS 651.72 / NBRC 13350 / KCC S-0626 / ISP 5235), this protein is Adenylate kinase.